The sequence spans 581 residues: Cytosolic Fe-S cluster assembly factor nar-1 (581 aa).

Positions 20, 68, 71, 74, 215, 270, 457, and 461 each coordinate [4Fe-4S] cluster.

It belongs to the NARF family.

Component of the cytosolic Fe/S protein assembly machinery. Required for maturation of extramitochondrial Fe/S proteins. May play a role in the transfer of pre-assembled Fe/S clusters to target apoproteins. The protein is Cytosolic Fe-S cluster assembly factor nar-1 (nar-1) of Neurospora crassa (strain ATCC 24698 / 74-OR23-1A / CBS 708.71 / DSM 1257 / FGSC 987).